We begin with the raw amino-acid sequence, 231 residues long: Uracil phosphoribosyltransferase (231 aa).

38–42 (KGLVR) is a binding site for GTP. 5-phospho-alpha-D-ribose 1-diphosphate contacts are provided by residues arginine 87, arginine 112, and 140-148 (DPMIATGST). Uracil is bound by residues isoleucine 203 and 208 to 210 (GDA). 5-phospho-alpha-D-ribose 1-diphosphate is bound at residue aspartate 209.

It belongs to the UPRTase family. It depends on Mg(2+) as a cofactor.

It carries out the reaction UMP + diphosphate = 5-phospho-alpha-D-ribose 1-diphosphate + uracil. The protein operates within pyrimidine metabolism; UMP biosynthesis via salvage pathway; UMP from uracil: step 1/1. Allosterically activated by GTP. Catalyzes the conversion of uracil and 5-phospho-alpha-D-ribose 1-diphosphate (PRPP) to UMP and diphosphate. This Methanococcus maripaludis (strain DSM 14266 / JCM 13030 / NBRC 101832 / S2 / LL) protein is Uracil phosphoribosyltransferase.